The sequence spans 74 residues: Conotoxin VnMEKL-0221 (74 aa).

A signal peptide spans 1–19 (MEKLTILLLVAAVLMWTQA). The propeptide occupies 20-46 (LIQEKRPKEKIKFLSKRKTTAESWWEG). Cystine bridges form between Cys48–Cys62, Cys55–Cys66, and Cys61–Cys71.

It belongs to the conotoxin O2 superfamily. Expressed by the venom duct.

The protein localises to the secreted. This Conus ventricosus (Mediterranean cone) protein is Conotoxin VnMEKL-0221.